Consider the following 332-residue polypeptide: Palmitoyltransferase ZDHHC15B (332 aa).

Residues 1–14 (MALSRALRCCQRIF) are Cytoplasmic-facing. The chain crosses the membrane as a helical span at residues 15–35 (SWIPVIIISSVVLWSYYAYVF). Residues 36-50 (ELCFVTLSNNLERVT) lie on the Lumenal side of the membrane. The chain crosses the membrane as a helical span at residues 51-71 (YLLIFHVCFIMFCWTYWKAIF). Topologically, residues 72–166 (TPPSTPTKKF…NNCVGFSNYK (95 aa)) are cytoplasmic. One can recognise a DHHC domain in the interval 123 to 173 (RFCDRCQVIKPDRCHHCSVCETCVLKMDHHCPWVNNCVGFSNYKFFLLFLS). Zn(2+) contacts are provided by Cys125 and Cys128. Lys132 serves as a coordination point for substrate. Residues His138, Cys139, Cys142, Cys145, and His152 each coordinate Zn(2+). The active-site S-palmitoyl cysteine intermediate is the Cys153. A Zn(2+)-binding site is contributed by Cys159. Residues 167-187 (FFLLFLSYSMIYCVFIASTVF) traverse the membrane as a helical segment. Over 188–204 (QYFLKFWVGDLPNGPAK) the chain is Lumenal. Residues 205 to 228 (FHVLFLLFVALMFFVSLMFLFGYH) form a helical membrane-spanning segment. Residues 229–332 (CWLVAKNRST…GSSLLIRTES (104 aa)) lie on the Cytoplasmic side of the membrane. The segment at 305–332 (EEKWVEDGGSDEESADENGSSLLIRTES) is disordered.

This sequence belongs to the DHHC palmitoyltransferase family. Post-translationally, autopalmitoylated (in vitro).

It localises to the golgi apparatus membrane. The protein localises to the postsynaptic density. It carries out the reaction L-cysteinyl-[protein] + hexadecanoyl-CoA = S-hexadecanoyl-L-cysteinyl-[protein] + CoA. The enzyme catalyses L-cysteinyl-[protein] + tetradecanoyl-CoA = S-tetradecanoyl-L-cysteinyl-[protein] + CoA. It catalyses the reaction L-cysteinyl-[protein] + octadecanoyl-CoA = S-octadecanoyl-L-cysteinyl-[protein] + CoA. Palmitoyltransferase that catalyzes the addition of palmitate onto various protein substrates. Has no stringent fatty acid selectivity and in addition to palmitate can also transfer onto target proteins myristate from tetradecanoyl-CoA and stearate from octadecanoyl-CoA. May thereby regulate target proteins association and localization to membranes. In the nervous system, probably catalyzes the palmitoylation of synaptic proteins and is involved in the differentiation of dopaminergic neurons and the development of the diencephalon. In Danio rerio (Zebrafish), this protein is Palmitoyltransferase ZDHHC15B (zdhhc15b).